Here is a 466-residue protein sequence, read N- to C-terminus: 3-isopropylmalate dehydratase large subunit (466 aa).

[4Fe-4S] cluster is bound by residues cysteine 347, cysteine 407, and cysteine 410.

It belongs to the aconitase/IPM isomerase family. LeuC type 1 subfamily. In terms of assembly, heterodimer of LeuC and LeuD. [4Fe-4S] cluster is required as a cofactor.

The enzyme catalyses (2R,3S)-3-isopropylmalate = (2S)-2-isopropylmalate. Its pathway is amino-acid biosynthesis; L-leucine biosynthesis; L-leucine from 3-methyl-2-oxobutanoate: step 2/4. Its function is as follows. Catalyzes the isomerization between 2-isopropylmalate and 3-isopropylmalate, via the formation of 2-isopropylmaleate. This chain is 3-isopropylmalate dehydratase large subunit, found in Salmonella paratyphi A (strain ATCC 9150 / SARB42).